A 626-amino-acid polypeptide reads, in one-letter code: tRNA uridine 5-carboxymethylaminomethyl modification enzyme MnmG (626 aa).

13–18 (GGGHAG) contributes to the FAD binding site. Residue 273–287 (GPRYCPSIEDKIHRF) coordinates NAD(+).

The protein belongs to the MnmG family. As to quaternary structure, homodimer. Heterotetramer of two MnmE and two MnmG subunits. It depends on FAD as a cofactor.

It localises to the cytoplasm. Its function is as follows. NAD-binding protein involved in the addition of a carboxymethylaminomethyl (cmnm) group at the wobble position (U34) of certain tRNAs, forming tRNA-cmnm(5)s(2)U34. The protein is tRNA uridine 5-carboxymethylaminomethyl modification enzyme MnmG of Acinetobacter baylyi (strain ATCC 33305 / BD413 / ADP1).